The primary structure comprises 180 residues: Bifunctional protein PyrR (180 aa).

Positions Val101–Thr113 match the PRPP-binding motif.

The protein belongs to the purine/pyrimidine phosphoribosyltransferase family. PyrR subfamily. Homodimer and homohexamer; in equilibrium.

It catalyses the reaction UMP + diphosphate = 5-phospho-alpha-D-ribose 1-diphosphate + uracil. Its function is as follows. Regulates transcriptional attenuation of the pyrimidine nucleotide (pyr) operon by binding in a uridine-dependent manner to specific sites on pyr mRNA. This disrupts an antiterminator hairpin in the RNA and favors formation of a downstream transcription terminator, leading to a reduced expression of downstream genes. Also displays a weak uracil phosphoribosyltransferase activity which is not physiologically significant. The chain is Bifunctional protein PyrR from Oceanobacillus iheyensis (strain DSM 14371 / CIP 107618 / JCM 11309 / KCTC 3954 / HTE831).